The following is a 57-amino-acid chain: UPF0391 membrane protein AZOSEA39630 (57 aa).

The next 2 membrane-spanning stretches (helical) occupy residues 4 to 24 and 37 to 57; these read WAII…TGVA and IALA…VLVF.

This sequence belongs to the UPF0391 family.

It is found in the cell membrane. The protein is UPF0391 membrane protein AZOSEA39630 of Aromatoleum aromaticum (strain DSM 19018 / LMG 30748 / EbN1) (Azoarcus sp. (strain EbN1)).